The following is a 435-amino-acid chain: Serine--tRNA ligase (435 aa).

237–239 (TAE) serves as a coordination point for L-serine. 268-270 (RSE) is a binding site for ATP. Residue E291 coordinates L-serine. 355-358 (EISS) provides a ligand contact to ATP. S390 provides a ligand contact to L-serine.

This sequence belongs to the class-II aminoacyl-tRNA synthetase family. Type-1 seryl-tRNA synthetase subfamily. Homodimer. The tRNA molecule binds across the dimer.

The protein resides in the cytoplasm. It carries out the reaction tRNA(Ser) + L-serine + ATP = L-seryl-tRNA(Ser) + AMP + diphosphate + H(+). It catalyses the reaction tRNA(Sec) + L-serine + ATP = L-seryl-tRNA(Sec) + AMP + diphosphate + H(+). It functions in the pathway aminoacyl-tRNA biosynthesis; selenocysteinyl-tRNA(Sec) biosynthesis; L-seryl-tRNA(Sec) from L-serine and tRNA(Sec): step 1/1. Catalyzes the attachment of serine to tRNA(Ser). Is also able to aminoacylate tRNA(Sec) with serine, to form the misacylated tRNA L-seryl-tRNA(Sec), which will be further converted into selenocysteinyl-tRNA(Sec). The protein is Serine--tRNA ligase of Lactobacillus acidophilus (strain ATCC 700396 / NCK56 / N2 / NCFM).